A 264-amino-acid chain; its full sequence is Occludin/ELL domain-containing protein 1 (264 aa).

The segment covering 1–10 (MHNPDGSASP) has biased composition (polar residues). Positions 1–112 (MHNPDGSASP…QPGPHKAKTK (112 aa)) are disordered. Residues 96–105 (PRPPCQPQPG) are compositionally biased toward pro residues. Positions 147 to 257 (PDYELKYPPV…QIQKFDDQGD (111 aa)) constitute an OCEL domain.

This sequence belongs to the ELL/occludin family.

The chain is Occludin/ELL domain-containing protein 1 (OCEL1) from Homo sapiens (Human).